The following is a 150-amino-acid chain: Urease accessory protein UreE (150 aa).

Belongs to the UreE family.

The protein localises to the cytoplasm. In terms of biological role, involved in urease metallocenter assembly. Binds nickel. Probably functions as a nickel donor during metallocenter assembly. The chain is Urease accessory protein UreE from Staphylococcus epidermidis (strain ATCC 35984 / DSM 28319 / BCRC 17069 / CCUG 31568 / BM 3577 / RP62A).